The following is a 420-amino-acid chain: uncharacterized protein (420 aa).

Positions 43-215 (NLCLVLDHSG…HTFRQLFQRM (173 aa)) constitute a VWFA domain. A disordered region spans residues 389-420 (LQSGEDLSEGDRKKTRMVSKTTLQPPSAPSEH).

This is an uncharacterized protein from Synechocystis sp. (strain ATCC 27184 / PCC 6803 / Kazusa).